Here is a 417-residue protein sequence, read N- to C-terminus: Serine protease hepsin (417 aa).

The Cytoplasmic portion of the chain corresponds to 1–23 (MAQKEGGRTVPCCSRPKVAALTA). A helical; Signal-anchor for type II membrane protein membrane pass occupies residues 24–44 (GTLLLLTAIGAASWAIVAVLL). Topologically, residues 45–417 (RSDQEPLYPV…SEASGMVTQL (373 aa)) are extracellular. The SRCR domain occupies 54-151 (VQVSSADARL…RGRFLAAICQ (98 aa)). 8 disulfide bridges follow: cysteine 77-cysteine 140, cysteine 90-cysteine 150, cysteine 119-cysteine 138, cysteine 153-cysteine 277, cysteine 188-cysteine 204, cysteine 291-cysteine 359, cysteine 322-cysteine 338, and cysteine 349-cysteine 381. Asparagine 112 carries an N-linked (GlcNAc...) asparagine glycan. The Peptidase S1 domain occupies 163–405 (IVGGRDTSLG…FREWIFQAIK (243 aa)). Active-site charge relay system residues include histidine 203 and aspartate 257. The active-site Charge relay system is the serine 353.

It belongs to the peptidase S1 family. Detected in liver and kidney.

It is found in the cell membrane. The protein resides in the apical cell membrane. It catalyses the reaction Cleavage after basic amino-acid residues, with Arg strongly preferred to Lys.. In terms of biological role, serine protease that cleaves extracellular substrates, and contributes to the proteolytic processing of growth factors, such as HGF and MST1/HGFL. Plays a role in cell growth and maintenance of cell morphology. Plays a role in the proteolytic processing of ACE2. Mediates the proteolytic cleavage of urinary UMOD that is required for UMOD polymerization. The chain is Serine protease hepsin (HPN) from Homo sapiens (Human).